The chain runs to 342 residues: Holliday junction branch migration complex subunit RuvB (342 aa).

The tract at residues Met-1–Tyr-185 is large ATPase domain (RuvB-L). Residues Leu-24, Arg-25, Gly-66, Lys-69, Thr-70, Thr-71, Glu-132–Phe-134, Arg-175, Tyr-185, and Arg-222 each bind ATP. Thr-70 provides a ligand contact to Mg(2+). The segment at Asp-186–Asp-256 is small ATPAse domain (RuvB-S). The segment at Glu-259 to Glu-342 is head domain (RuvB-H). DNA is bound by residues Arg-314 and Arg-319.

Belongs to the RuvB family. Homohexamer. Forms an RuvA(8)-RuvB(12)-Holliday junction (HJ) complex. HJ DNA is sandwiched between 2 RuvA tetramers; dsDNA enters through RuvA and exits via RuvB. An RuvB hexamer assembles on each DNA strand where it exits the tetramer. Each RuvB hexamer is contacted by two RuvA subunits (via domain III) on 2 adjacent RuvB subunits; this complex drives branch migration. In the full resolvosome a probable DNA-RuvA(4)-RuvB(12)-RuvC(2) complex forms which resolves the HJ.

It is found in the cytoplasm. The enzyme catalyses ATP + H2O = ADP + phosphate + H(+). The RuvA-RuvB-RuvC complex processes Holliday junction (HJ) DNA during genetic recombination and DNA repair, while the RuvA-RuvB complex plays an important role in the rescue of blocked DNA replication forks via replication fork reversal (RFR). RuvA specifically binds to HJ cruciform DNA, conferring on it an open structure. The RuvB hexamer acts as an ATP-dependent pump, pulling dsDNA into and through the RuvAB complex. RuvB forms 2 homohexamers on either side of HJ DNA bound by 1 or 2 RuvA tetramers; 4 subunits per hexamer contact DNA at a time. Coordinated motions by a converter formed by DNA-disengaged RuvB subunits stimulates ATP hydrolysis and nucleotide exchange. Immobilization of the converter enables RuvB to convert the ATP-contained energy into a lever motion, pulling 2 nucleotides of DNA out of the RuvA tetramer per ATP hydrolyzed, thus driving DNA branch migration. The RuvB motors rotate together with the DNA substrate, which together with the progressing nucleotide cycle form the mechanistic basis for DNA recombination by continuous HJ branch migration. Branch migration allows RuvC to scan DNA until it finds its consensus sequence, where it cleaves and resolves cruciform DNA. The protein is Holliday junction branch migration complex subunit RuvB of Amoebophilus asiaticus (strain 5a2).